A 136-amino-acid polypeptide reads, in one-letter code: Histone H3 (136 aa).

Residues 1–43 (MARTKQTARKNVGGKAPRKHIGQKSARKTASTTAGMKKPHRYR) are disordered. Lys-10 bears the N6-methylated lysine mark. Lys-15 and Lys-24 each carry N6-acetyllysine. Over residues 16–27 (APRKHIGQKSAR) the composition is skewed to basic residues. N6-methylated lysine occurs at positions 28 and 37.

This sequence belongs to the histone H3 family. The nucleosome is a histone octamer containing two molecules each of H2A, H2B, H3 and H4 assembled in one H3-H4 heterotetramer and two H2A-H2B heterodimers. The octamer wraps approximately 147 bp of DNA.

The protein resides in the nucleus. The protein localises to the chromosome. In terms of biological role, core component of nucleosome. Nucleosomes wrap and compact DNA into chromatin, limiting DNA accessibility to the cellular machineries which require DNA as a template. Histones thereby play a central role in transcription regulation, DNA repair, DNA replication and chromosomal stability. DNA accessibility is regulated via a complex set of post-translational modifications of histones, also called histone code, and nucleosome remodeling. The protein is Histone H3 of Euplotes crassus.